The primary structure comprises 142 residues: Hemoglobin subunit alpha (142 aa).

A Globin domain is found at 2–142 (VLSATDKSNV…VSTVLTSKYR (141 aa)). The residue at position 4 (S4) is a Phosphoserine. N6-succinyllysine occurs at positions 8 and 12. K17 is subject to N6-acetyllysine; alternate. K17 carries the post-translational modification N6-succinyllysine; alternate. Y25 is subject to Phosphotyrosine. Phosphoserine is present on S36. Residue K41 is modified to N6-succinyllysine. A Phosphoserine modification is found at S50. Residue H59 participates in O2 binding. H88 provides a ligand contact to heme b. S103 carries the phosphoserine modification. T109 is subject to Phosphothreonine. S125 bears the Phosphoserine mark. 2 positions are modified to phosphothreonine: T135 and T138. S139 is modified (phosphoserine).

This sequence belongs to the globin family. In terms of assembly, heterotetramer of two alpha chains and two beta chains. Red blood cells.

Its function is as follows. Involved in oxygen transport from the lung to the various peripheral tissues. Functionally, hemopressin acts as an antagonist peptide of the cannabinoid receptor CNR1. Hemopressin-binding efficiently blocks cannabinoid receptor CNR1 and subsequent signaling. The sequence is that of Hemoglobin subunit alpha (HBA) from Alces alces alces (European moose).